Consider the following 275-residue polypeptide: Exosome complex component Rrp42 (275 aa).

The protein belongs to the RNase PH family. Rrp42 subfamily. Component of the archaeal exosome complex. Forms a hexameric ring-like arrangement composed of 3 Rrp41-Rrp42 heterodimers. The hexameric ring associates with a trimer of Rrp4 and/or Csl4 subunits.

It is found in the cytoplasm. Functionally, non-catalytic component of the exosome, which is a complex involved in RNA degradation. Contributes to the structuring of the Rrp41 active site. In Saccharolobus islandicus (strain M.16.27) (Sulfolobus islandicus), this protein is Exosome complex component Rrp42.